We begin with the raw amino-acid sequence, 861 residues long: Major vault protein (861 aa).

Ala-2 bears the N-acetylalanine mark. MVP repeat units follow at residues Ala-2–Arg-56, His-57–Pro-111, Leu-112–Gln-164, Ala-165–Asp-217, Ala-218–Pro-272, Ile-273–Val-323, Tyr-324–Ala-379, Ile-380–Val-457, and Val-458–Pro-520. Position 421 is a phosphoserine (Ser-421). A Glycyl lysine isopeptide (Lys-Gly) (interchain with G-Cter in SUMO2) cross-link involves residue Lys-444. Lys-704 is covalently cross-linked (Glycyl lysine isopeptide (Lys-Gly) (interchain with G-Cter in SUMO2)).

In terms of assembly, the vault ribonucleoprotein particle is a huge (400 A x 670 A) cage structure of 12.9 MDa. It consists of a dimer of half-vaults, with each half-vault comprising 39 identical major vault protein (MVP) chains, PARP4 and one or more vault RNAs (vRNAs). Interacts with PTEN and activated MAPK1. The phosphorylated protein interacts with the SH2 domains of PTPN11 and SRC. Interacts with APEX1. May interact with ZNF540. Interacts with TEP1. Phosphorylated on Tyr residues after EGF stimulation. In terms of processing, dephosphorylated by PTPN11.

The protein localises to the cytoplasm. Its subcellular location is the nucleus. Required for normal vault structure. Vaults are multi-subunit structures that may act as scaffolds for proteins involved in signal transduction. Vaults may also play a role in nucleo-cytoplasmic transport. Down-regulates IFNG-mediated STAT1 signaling and subsequent activation of JAK. Down-regulates SRC activity and signaling through MAP kinases. In Mus musculus (Mouse), this protein is Major vault protein (Mvp).